The chain runs to 188 residues: Protein YOP1 (188 aa).

Topologically, residues 1–35 are cytoplasmic; that stretch reads MAEIAGNLQRILQSLDRQFAGNKYLQEFERKTGFP. The chain crosses the membrane as a helical span at residues 36-55; sequence KSYAIAGAGVAYLFIIFINV. Topologically, residues 56-57 are lumenal; that stretch reads GG. A helical membrane pass occupies residues 58 to 78; the sequence is VGEILSNFLGFVLPCYYSLHA. Residues 79 to 88 lie on the Cytoplasmic side of the membrane; that stretch reads IKTTTTADDT. A helical transmembrane segment spans residues 89–105; the sequence is ELLTYWIVFAFFSVIEF. The Lumenal segment spans residues 106-108; that stretch reads WSK. The helical transmembrane segment at 109–127 threads the bilayer; sequence AILYWVPFYWFFKTIFLIF. Residues 128 to 188 are Cytoplasmic-facing; sequence IALPQLGGAS…TGAASHQSSD (61 aa). The interval 163–188 is disordered; it reads ISSKMEQAAKGASARATGAASHQSSD. Residues 170 to 188 show a composition bias toward low complexity; it reads AAKGASARATGAASHQSSD.

Belongs to the DP1 family. In terms of assembly, oligomer.

Its subcellular location is the endoplasmic reticulum membrane. The protein resides in the golgi apparatus membrane. Functionally, required to generate and maintain the structure of the tubular endoplasmic reticulum network and the vacuole. Induces high curvature in membranes and causes membrane tubule formation. Involved in membrane/vesicle trafficking. The chain is Protein YOP1 (YOP1) from Eremothecium gossypii (strain ATCC 10895 / CBS 109.51 / FGSC 9923 / NRRL Y-1056) (Yeast).